The primary structure comprises 129 residues: Fluoride-specific ion channel FluC (129 aa).

The next 4 helical transmembrane spans lie at 10 to 30, 35 to 55, 71 to 91, and 105 to 125; these read LLVG…ALAF, PGFP…IGFL, LFLV…MFEG, and LYLA…IIAA. Residues glycine 79 and threonine 82 each coordinate Na(+).

The protein belongs to the fluoride channel Fluc/FEX (TC 1.A.43) family.

It is found in the cell inner membrane. The catalysed reaction is fluoride(in) = fluoride(out). With respect to regulation, na(+) is not transported, but it plays an essential structural role and its presence is essential for fluoride channel function. Its function is as follows. Fluoride-specific ion channel. Important for reducing fluoride concentration in the cell, thus reducing its toxicity. The sequence is that of Fluoride-specific ion channel FluC from Chlorobium luteolum (strain DSM 273 / BCRC 81028 / 2530) (Pelodictyon luteolum).